Here is a 525-residue protein sequence, read N- to C-terminus: GMP synthase [glutamine-hydrolyzing] (525 aa).

The Glutamine amidotransferase type-1 domain occupies 8 to 207 (KILILDFGSQ…ALEICACAAN (200 aa)). Cys85 serves as the catalytic Nucleophile. Active-site residues include His181 and Glu183. Residues 208–400 (WKPASIIEDA…LGLPYNMLYR (193 aa)) form the GMPS ATP-PPase domain. Residue 235 to 241 (SGGVDSS) coordinates ATP.

In terms of assembly, homodimer.

It carries out the reaction XMP + L-glutamine + ATP + H2O = GMP + L-glutamate + AMP + diphosphate + 2 H(+). It participates in purine metabolism; GMP biosynthesis; GMP from XMP (L-Gln route): step 1/1. Functionally, catalyzes the synthesis of GMP from XMP. This chain is GMP synthase [glutamine-hydrolyzing], found in Shewanella halifaxensis (strain HAW-EB4).